We begin with the raw amino-acid sequence, 29 residues long: Cyclotide cter-K (29 aa).

The cyclopeptide (His-Asn) cross-link spans 1–29 (HEPCGESCVFIPCITTVVGCSCKNKVCYN). 3 disulfides stabilise this stretch: Cys-4–Cys-20, Cys-8–Cys-22, and Cys-13–Cys-27.

Post-translationally, contains 3 disulfide bonds. This is a cyclic peptide.

In terms of biological role, probably participates in a plant defense mechanism. The polypeptide is Cyclotide cter-K (Clitoria ternatea (Butterfly pea)).